A 706-amino-acid chain; its full sequence is Ribosomal RNA large subunit methyltransferase K/L (706 aa).

Positions 43-154 (LMYQSLLWSR…RDMASVALDL (112 aa)) constitute a THUMP domain.

The protein belongs to the methyltransferase superfamily. RlmKL family.

Its subcellular location is the cytoplasm. The enzyme catalyses guanosine(2445) in 23S rRNA + S-adenosyl-L-methionine = N(2)-methylguanosine(2445) in 23S rRNA + S-adenosyl-L-homocysteine + H(+). It catalyses the reaction guanosine(2069) in 23S rRNA + S-adenosyl-L-methionine = N(2)-methylguanosine(2069) in 23S rRNA + S-adenosyl-L-homocysteine + H(+). Specifically methylates the guanine in position 2445 (m2G2445) and the guanine in position 2069 (m7G2069) of 23S rRNA. This Yersinia pseudotuberculosis serotype O:1b (strain IP 31758) protein is Ribosomal RNA large subunit methyltransferase K/L.